A 784-amino-acid chain; its full sequence is LPS-assembly protein LptD (784 aa).

A signal peptide spans M1–A24. 2 disulfide bridges follow: C31/C724 and C173/C725.

Belongs to the LptD family. As to quaternary structure, component of the lipopolysaccharide transport and assembly complex. Interacts with LptE and LptA. In terms of processing, contains two intramolecular disulfide bonds.

Its subcellular location is the cell outer membrane. Its function is as follows. Together with LptE, is involved in the assembly of lipopolysaccharide (LPS) at the surface of the outer membrane. The protein is LPS-assembly protein LptD of Shigella sonnei (strain Ss046).